The chain runs to 962 residues: Exportin-T (962 aa).

M1 carries the post-translational modification N-acetylmethionine. Position 634 is an N6-acetyllysine (K634).

In terms of assembly, found in a complex with XPOT, Ran and tRNA. Probably found in a complex with nucleoporins. Interacts with Ran and tRNA in a GTP-dependent manner.

The protein localises to the nucleus. Its subcellular location is the cytoplasm. Mediates the nuclear export of aminoacylated tRNAs. In the nucleus binds to tRNA and to the GTPase Ran in its active GTP-bound form. Docking of this trimeric complex to the nuclear pore complex (NPC) is mediated through binding to nucleoporins. Upon transit of a nuclear export complex into the cytoplasm, disassembling of the complex and hydrolysis of Ran-GTP to Ran-GDP (induced by RANBP1 and RANGAP1, respectively) cause release of the tRNA from the export receptor. XPOT then return to the nuclear compartment and mediate another round of transport. The directionality of nuclear export is thought to be conferred by an asymmetric distribution of the GTP- and GDP-bound forms of Ran between the cytoplasm and nucleus. This chain is Exportin-T (XPOT), found in Pongo abelii (Sumatran orangutan).